An 881-amino-acid chain; its full sequence is Phosphoenolpyruvate carboxylase (881 aa).

Active-site residues include H142 and K547.

The protein belongs to the PEPCase type 1 family. Mg(2+) serves as cofactor.

The catalysed reaction is oxaloacetate + phosphate = phosphoenolpyruvate + hydrogencarbonate. Forms oxaloacetate, a four-carbon dicarboxylic acid source for the tricarboxylic acid cycle. The protein is Phosphoenolpyruvate carboxylase of Hahella chejuensis (strain KCTC 2396).